The sequence spans 393 residues: MAFKLNIGLLALSLSLSLVHLDGVRAGMATRYWDCCLASASWEGKAPVYAPVDACKADGVTLIDSKKDPSGQSGCNGGNKFMCSCMQPFDDETDPTLAFGFGAFTTGQESDTDCACFYAEFEHDAQGKAMKRNKLIFQVTNVGGDVQSQNFDFQIPGGGLGAFPKGCPAQWGVEASLWGDQYGGVKSATECSKLPKPLQEGCKWRFSEWGDNPVLKGSPKRVKCPKSLIDRSGCQRKDDNTISPYSGKVDSANTAAPAQYKRDRSVCLAGGKKGKSAAGGVDGSGDASGGADASGAGGAAEGSQGQPEGYGQPSGGNDQGSSNGDATTGAGSGSGSDSGSTANGSGSGAPTSGSDGSAVAPPSGGSNPGAAQGGQGGAQPGPSGGHKKCHKKH.

The signal sequence occupies residues 1 to 26 (MAFKLNIGLLALSLSLSLVHLDGVRA). The active-site Nucleophile is D34. D152 serves as the catalytic Proton donor. Positions 233 to 393 (GCQRKDDNTI…GGHKKCHKKH (161 aa)) are disordered. Low complexity-rich tracts occupy residues 319–329 (QGSSNGDATTG) and 337–370 (DSGS…NPGA). A glycan (N-linked (GlcNAc...) asparagine) is linked at N343. Residues 371-384 (AQGGQGGAQPGPSG) are compositionally biased toward gly residues.

It belongs to the glycosyl hydrolase 45 (cellulase K) family. In terms of processing, may also be O-glycosylated. Hyphal tip.

It localises to the secreted. It catalyses the reaction Endohydrolysis of (1-&gt;4)-beta-D-glucosidic linkages in cellulose, lichenin and cereal beta-D-glucans.. This Mycosarcoma maydis (Corn smut fungus) protein is Endoglucanase 1 (EGL1).